The following is a 155-amino-acid chain: Probable methanogenesis regulatory protein FilR2 (155 aa).

The 125-residue stretch at 18–142 folds into the Response regulatory domain; that stretch reads IILLVEDNNA…DLKRTVEEIK (125 aa). Asp75 is subject to 4-aspartylphosphate.

In terms of processing, phosphorylated by FilI.

In terms of biological role, member of the two-component regulatory system FilI/FilRs, which is involved in the regulation of methanogenesis. This is Probable methanogenesis regulatory protein FilR2 from Methanothrix harundinacea (strain 6Ac) (Methanosaeta harundinacea).